The following is a 1091-amino-acid chain: Voltage-dependent calcium channel subunit alpha-2/delta-1 (1091 aa).

The N-terminal stretch at 1–24 (MAAGCLLALTLTLFQSWLIGPSSE) is a signal peptide. Residues 25–1061 (EPFPSPVTIK…VLEDYTDCGG (1037 aa)) are Extracellular-facing. Asparagine 92 is a glycosylation site (N-linked (GlcNAc...) asparagine). The residue at position 119 (serine 119) is a Phosphoserine. Asparagine 136 and asparagine 184 each carry an N-linked (GlcNAc...) asparagine glycan. Residues 252-429 (DMLILVDVSG…INTQEYLDVL (178 aa)) enclose the VWFA domain. A divalent metal cation-binding residues include aspartate 258, serine 260, and serine 262. An MIDAS-like motif motif is present at residues 258–262 (DVSGS). N-linked (GlcNAc...) asparagine glycosylation is found at asparagine 323 and asparagine 347. An intrachain disulfide couples cysteine 403 to cysteine 1047. A Cache domain is found at 445–536 (WTNVYLDALE…QPKNPKSQEP (92 aa)). Asparagine 593, asparagine 769, asparagine 876, and asparagine 973 each carry an N-linked (GlcNAc...) asparagine glycan. The helical transmembrane segment at 1062-1082 (VSGLNPSLWSIFGLQFILLWL) threads the bilayer. Residues 1083 to 1091 (VSGSRHYLW) lie on the Cytoplasmic side of the membrane.

Belongs to the calcium channel subunit alpha-2/delta family. In terms of assembly, dimer formed of alpha-2-1 and delta-1 chains; disulfide-linked. Voltage-dependent calcium channels are multisubunit complexes, consisting of alpha-1 (CACNA1), alpha-2 (CACNA2D), beta (CACNB) and delta (CACNA2D) subunits in a 1:1:1:1 ratio. In terms of processing, proteolytically processed into subunits alpha-2-1 and delta-1 that are disulfide-linked.

The protein resides in the membrane. Its subcellular location is the cell membrane. Functionally, the alpha-2/delta subunit of voltage-dependent calcium channels regulates calcium current density and activation/inactivation kinetics of the calcium channel. Plays an important role in excitation-contraction coupling. The chain is Voltage-dependent calcium channel subunit alpha-2/delta-1 (Cacna2d1) from Rattus norvegicus (Rat).